The following is a 93-amino-acid chain: DNA-directed RNA polymerase subunit omega (93 aa).

This sequence belongs to the RNA polymerase subunit omega family. The RNAP catalytic core consists of 2 alpha, 1 beta, 1 beta' and 1 omega subunit. When a sigma factor is associated with the core the holoenzyme is formed, which can initiate transcription.

The enzyme catalyses RNA(n) + a ribonucleoside 5'-triphosphate = RNA(n+1) + diphosphate. Promotes RNA polymerase assembly. Latches the N- and C-terminal regions of the beta' subunit thereby facilitating its interaction with the beta and alpha subunits. This chain is DNA-directed RNA polymerase subunit omega, found in Glaesserella parasuis serovar 5 (strain SH0165) (Haemophilus parasuis).